The primary structure comprises 310 residues: N-acetyl-gamma-glutamyl-phosphate reductase (310 aa).

The active site involves Cys117.

This sequence belongs to the NAGSA dehydrogenase family. Type 2 subfamily.

The protein resides in the cytoplasm. The catalysed reaction is N-acetyl-L-glutamate 5-semialdehyde + phosphate + NADP(+) = N-acetyl-L-glutamyl 5-phosphate + NADPH + H(+). It participates in amino-acid biosynthesis; L-arginine biosynthesis; N(2)-acetyl-L-ornithine from L-glutamate: step 3/4. Functionally, catalyzes the NADPH-dependent reduction of N-acetyl-5-glutamyl phosphate to yield N-acetyl-L-glutamate 5-semialdehyde. The chain is N-acetyl-gamma-glutamyl-phosphate reductase from Rhizobium etli (strain ATCC 51251 / DSM 11541 / JCM 21823 / NBRC 15573 / CFN 42).